Reading from the N-terminus, the 301-residue chain is ATP synthase gamma chain (301 aa).

This sequence belongs to the ATPase gamma chain family. F-type ATPases have 2 components, CF(1) - the catalytic core - and CF(0) - the membrane proton channel. CF(1) has five subunits: alpha(3), beta(3), gamma(1), delta(1), epsilon(1). CF(0) has three main subunits: a, b and c.

It is found in the cell inner membrane. Its function is as follows. Produces ATP from ADP in the presence of a proton gradient across the membrane. The gamma chain is believed to be important in regulating ATPase activity and the flow of protons through the CF(0) complex. In Helicobacter pylori (strain ATCC 700392 / 26695) (Campylobacter pylori), this protein is ATP synthase gamma chain.